The primary structure comprises 139 residues: MIKRYEACFLFKSEEIEYKGSLEEVKKSLEFFGATDVVSNFIGERALEYPIKKQARGRYEIIEFSMEGNNLKEFESRLKLIKNLLRYMILVKIVRKINTKKIKRRNFREFRDNVDKDSLKGASKVETPTGPESTDIQEK.

Residues 119–139 (LKGASKVETPTGPESTDIQEK) are disordered. A compositionally biased stretch (polar residues) spans 130 to 139 (GPESTDIQEK).

The protein belongs to the bacterial ribosomal protein bS6 family.

Binds together with bS18 to 16S ribosomal RNA. This is Small ribosomal subunit protein bS6 from Borreliella burgdorferi (strain ZS7) (Borrelia burgdorferi).